A 261-amino-acid chain; its full sequence is Indole-3-glycerol phosphate synthase (261 aa).

It belongs to the TrpC family.

It carries out the reaction 1-(2-carboxyphenylamino)-1-deoxy-D-ribulose 5-phosphate + H(+) = (1S,2R)-1-C-(indol-3-yl)glycerol 3-phosphate + CO2 + H2O. Its pathway is amino-acid biosynthesis; L-tryptophan biosynthesis; L-tryptophan from chorismate: step 4/5. This is Indole-3-glycerol phosphate synthase from Oceanobacillus iheyensis (strain DSM 14371 / CIP 107618 / JCM 11309 / KCTC 3954 / HTE831).